The chain runs to 364 residues: RNA-binding protein 4 (364 aa).

RRM domains are found at residues 2–72 (VKLF…ASKN) and 78–148 (TKLH…LSTS). Residue Lys-79 forms a Glycyl lysine isopeptide (Lys-Gly) (interchain with G-Cter in SUMO2) linkage. Ser-86 is subject to Phosphoserine. Lys-92 participates in a covalent cross-link: Glycyl lysine isopeptide (Lys-Gly) (interchain with G-Cter in SUMO2). Residues 160–177 (SGCYRCGKEGHWSKECPI) form a CCHC-type zinc finger. The interaction with TNPO3 stretch occupies residues 196-364 (AVRTPYTMSY…YADRARYSAF (169 aa)). Ser-309 carries the phosphoserine modification.

In terms of assembly, interacts with TNPO3; the interaction mediates nuclear import of the protein and is disrupted by nuclear Ran bound to GTP. Interacts with EIF4G1 and WT1. Interacts with EIF4A1; the interaction is modulated under stress-induced conditions. Interacts with AGO1. Interacts with AGO2; the interaction occurs under both cell proliferation and differentiation conditions and in an RNA- and phosphorylation-independent manner. Interacts with DDX5; the interaction occurs in an RNA-independent manner. Interacts with RBPMS; the interaction allows cooperative assembly of RNA-bound stable cell-specific alternative splicing regulatory complexes. Phosphorylated. Phosphorylated in vitro on Ser-309 by SRPK1. Phosphorylation on Ser-309 is induced upon cell stress signaling, which alters its subcellular localization and may modulate its activity on IRES-mediated mRNA translation. Phosphorylation on Ser-309 is induced upon cell muscle differentiation.

The protein resides in the nucleus. The protein localises to the nucleolus. It is found in the nucleus speckle. It localises to the cytoplasm. Its subcellular location is the cytoplasmic granule. Functionally, RNA-binding factor involved in multiple aspects of cellular processes like alternative splicing of pre-mRNA and translation regulation. Modulates alternative 5'-splice site and exon selection. Acts as a muscle cell differentiation-promoting factor. Activates exon skipping of the PTB pre-mRNA during muscle cell differentiation. Antagonizes the activity of the splicing factor PTBP1 to modulate muscle cell-specific exon selection of alpha tropomyosin. Binds to intronic pyrimidine-rich sequence of the TPM1 and MAPT pre-mRNAs. Required for the translational activation of PER1 mRNA in response to circadian clock. Binds directly to the 3'-UTR of the PER1 mRNA. Exerts a suppressive activity on Cap-dependent translation via binding to CU-rich responsive elements within the 3'UTR of mRNAs, a process increased under stress conditions or during myocytes differentiation. Recruits EIF4A1 to stimulate IRES-dependent translation initiation in respons to cellular stress. Associates to internal ribosome entry segment (IRES) in target mRNA species under stress conditions. Plays a role for miRNA-guided RNA cleavage and translation suppression by promoting association of AGO2-containing miRNPs with their cognate target mRNAs. Associates with miRNAs during muscle cell differentiation. Binds preferentially to 5'-CGCGCG[GCA]-3' motif in vitro. The polypeptide is RNA-binding protein 4 (RBM4) (Macaca fascicularis (Crab-eating macaque)).